Reading from the N-terminus, the 321-residue chain is ATP-dependent 6-phosphofructokinase (321 aa).

G12 lines the ATP pocket. Residues 22-26 (RAVVR) and 55-60 (RYSVSD) contribute to the ADP site. Residues 73–74 (RF) and 103–106 (GDGS) each bind ATP. Mg(2+) is bound at residue D104. Residue 127 to 129 (TID) coordinates substrate. Residue D129 is the Proton acceptor of the active site. Position 156 (R156) interacts with ADP. Residues R164 and 171–173 (MGR) each bind substrate. ADP-binding positions include 187–189 (GCE) and 215–217 (KRH). Substrate contacts are provided by residues E224, R245, and 251-254 (HVQR).

It belongs to the phosphofructokinase type A (PFKA) family. ATP-dependent PFK group I subfamily. Prokaryotic clade 'B1' sub-subfamily. As to quaternary structure, homotetramer. It depends on Mg(2+) as a cofactor.

It localises to the cytoplasm. It carries out the reaction beta-D-fructose 6-phosphate + ATP = beta-D-fructose 1,6-bisphosphate + ADP + H(+). Its pathway is carbohydrate degradation; glycolysis; D-glyceraldehyde 3-phosphate and glycerone phosphate from D-glucose: step 3/4. With respect to regulation, allosterically activated by ADP and other diphosphonucleosides, and allosterically inhibited by phosphoenolpyruvate. Its function is as follows. Catalyzes the phosphorylation of D-fructose 6-phosphate to fructose 1,6-bisphosphate by ATP, the first committing step of glycolysis. In Actinobacillus succinogenes (strain ATCC 55618 / DSM 22257 / CCUG 43843 / 130Z), this protein is ATP-dependent 6-phosphofructokinase.